We begin with the raw amino-acid sequence, 178 residues long: Large ribosomal subunit protein uL6 (178 aa).

The protein belongs to the universal ribosomal protein uL6 family. As to quaternary structure, part of the 50S ribosomal subunit.

In terms of biological role, this protein binds to the 23S rRNA, and is important in its secondary structure. It is located near the subunit interface in the base of the L7/L12 stalk, and near the tRNA binding site of the peptidyltransferase center. In Kocuria rhizophila (strain ATCC 9341 / DSM 348 / NBRC 103217 / DC2201), this protein is Large ribosomal subunit protein uL6.